Reading from the N-terminus, the 156-residue chain is Mitochondrial translation release factor in rescue (156 aa).

Positions 44 to 108 are GGQ domain; that stretch reads EEELEEQFVR…LREKLEVAYK (65 aa). Positions 58-60 match the GGQ motif; it reads GGQ. A coiled-coil region spans residues 100–141; it reads REKLEVAYKGEESELLKMKKESMQKKQDKRRKVNENIEKKRR. Composition is skewed to basic and acidic residues over residues 114 to 125 and 132 to 156; these read LLKMKKESMQKK and VNEN…DKST. A disordered region spans residues 114–156; it reads LLKMKKESMQKKQDKRRKVNENIEKKRRFKEMLNSKQEDDKST.

Belongs to the prokaryotic/mitochondrial release factor family. In terms of assembly, interacts (via C-terminus) with MTRES1 (via S4 domain). Associates with mitoribosomal S39 large subunit, peptidyl tRNA and nascent chain.

It is found in the mitochondrion. Functionally, part of a mitoribosome-associated quality control pathway that prevents aberrant translation by responding to interruptions during elongation. As heterodimer with MTRES1, ejects the unfinished nascent chain and peptidyl transfer RNA (tRNA), respectively, from stalled ribosomes. Recruitment of mitoribosome biogenesis factors to these quality control intermediates suggests additional roles for MTRES1 and MTRF during mitoribosome rescue. This is Mitochondrial translation release factor in rescue (mtrfr) from Danio rerio (Zebrafish).